We begin with the raw amino-acid sequence, 93 residues long: Cell division topological specificity factor (93 aa).

This sequence belongs to the MinE family.

Functionally, prevents the cell division inhibition by proteins MinC and MinD at internal division sites while permitting inhibition at polar sites. This ensures cell division at the proper site by restricting the formation of a division septum at the midpoint of the long axis of the cell. In Syntrophus aciditrophicus (strain SB), this protein is Cell division topological specificity factor.